Reading from the N-terminus, the 498-residue chain is NAD(P)H-quinone oxidoreductase subunit 2, chloroplastic (498 aa).

14 helical membrane passes run 18 to 38 (LTIL…VIDL), 51 to 71 (ISMV…GFFT), 87 to 107 (FFLL…ILCS), 111 to 131 (LAEF…LSCA), 134 to 154 (LVTI…LSGY), 168 to 188 (FLLM…LLYG), 211 to 231 (IIYL…SLFP), 244 to 264 (PTPV…ALFT), 278 to 298 (WHVA…LIAV), 306 to 326 (MLAF…LSAD), 337 to 357 (YTFI…LFGL), 379 to 399 (FSLV…GFFG), 411 to 431 (GLYS…YYYL), and 470 to 490 (IAMI…DPII).

The protein belongs to the complex I subunit 2 family. In terms of assembly, NDH is composed of at least 16 different subunits, 5 of which are encoded in the nucleus.

Its subcellular location is the plastid. It localises to the chloroplast thylakoid membrane. It catalyses the reaction a plastoquinone + NADH + (n+1) H(+)(in) = a plastoquinol + NAD(+) + n H(+)(out). The enzyme catalyses a plastoquinone + NADPH + (n+1) H(+)(in) = a plastoquinol + NADP(+) + n H(+)(out). In terms of biological role, NDH shuttles electrons from NAD(P)H:plastoquinone, via FMN and iron-sulfur (Fe-S) centers, to quinones in the photosynthetic chain and possibly in a chloroplast respiratory chain. The immediate electron acceptor for the enzyme in this species is believed to be plastoquinone. Couples the redox reaction to proton translocation, and thus conserves the redox energy in a proton gradient. The polypeptide is NAD(P)H-quinone oxidoreductase subunit 2, chloroplastic (Adiantum capillus-veneris (Maidenhair fern)).